The sequence spans 593 residues: Aspartate--tRNA(Asp/Asn) ligase (593 aa).

E175 contacts L-aspartate. The tract at residues 199-202 (QQYK) is aspartate. Residues R221 and H452 each contribute to the L-aspartate site. 221 to 223 (RDE) is a binding site for ATP. E486 is an ATP binding site. R493 is a binding site for L-aspartate. 538–541 (GVDR) is a binding site for ATP.

Belongs to the class-II aminoacyl-tRNA synthetase family. Type 1 subfamily. Homodimer.

The protein resides in the cytoplasm. The enzyme catalyses tRNA(Asx) + L-aspartate + ATP = L-aspartyl-tRNA(Asx) + AMP + diphosphate. Aspartyl-tRNA synthetase with relaxed tRNA specificity since it is able to aspartylate not only its cognate tRNA(Asp) but also tRNA(Asn). Reaction proceeds in two steps: L-aspartate is first activated by ATP to form Asp-AMP and then transferred to the acceptor end of tRNA(Asp/Asn). This is Aspartate--tRNA(Asp/Asn) ligase from Novosphingobium aromaticivorans (strain ATCC 700278 / DSM 12444 / CCUG 56034 / CIP 105152 / NBRC 16084 / F199).